Consider the following 708-residue polypeptide: MATTAELFEEPFVADEYIERLVWRTPGGGSRGGPEAFDPKRLLEEFVNHIQELQIMDERIQRKVEKLEQQCQKEAKEFAKKVQELQKSNQVAFQHFQELDEHISYVATKVCHLGDQLEGVNTPRQRAVEAQKLMKYFNEFLDGELKSDVFTNSEKIKEAADVIQKLHLIAQELPFDRFSEVKSKIASKYHDLECQLIQEFTSAQRRGEVSRMREVAAVLLHFKGYSHCIDVYIKQCQEGAYLRNDIFEDAAILCQRVNKQVGDIFSNPEAVLAKLIQSVFEIKLQSFVKDQLEECRKSDAEQYLKSLYDLYTRTTGLSSKLMEFNLGTDKQTFLSKLIKSIFISYLENYIEVEIGYLKSRSAMILQRYYDSKNHQKRSIGTGGIQDLKERIRQRTNLPLGPSIDTHGETFLSQEVVVNLLQETKQAFERCHRLSDPSDLPRNAFRIFTILVEFLCIEHIDYALETGLAGIPSSDSRNANLYFLDVVQQANTIFHLFDKQFNDHLMPLISSSPKLSECLQKKKEIIEQMEMKLDTGIDRTLNCMIGQMKHILAAEQKKTDFKPEDENNVLIQYTNACVKVCVYVRKQVEKIKNSMDGKNVDTVLMELGVRFHRLIYEHLQQYSYSCMGGMLAICDVAEYRKCAKDFKIPMVLHLFDTLHALCNLLVVAPDNLKQVCSGEQLANLDKNILHSFVQLRADYRSARLARHFS.

Alanine 2 is subject to N-acetylalanine. Residues 40-101 (KRLLEEFVNH…AFQHFQELDE (62 aa)) are a coiled coil. 3 positions are modified to phosphothreonine: threonine 122, threonine 395, and threonine 405. A Phosphoserine modification is found at serine 412.

It belongs to the SEC10 family. The exocyst complex is composed of EXOC1, EXOC2, EXOC3, EXOC4, EXOC5, EXOC6, EXOC7 and EXOC8. Interacts with EXOC3L1.

The protein localises to the cytoplasm. Its subcellular location is the midbody. Its function is as follows. Component of the exocyst complex involved in the docking of exocytic vesicles with fusion sites on the plasma membrane. The chain is Exocyst complex component 5 (Exoc5) from Mus musculus (Mouse).